The sequence spans 88 residues: uncharacterized protein (88 aa).

Transmembrane regions (helical) follow at residues 13–33 (FLAF…GWGP) and 62–82 (WFNI…ITGI).

The protein resides in the cell membrane. This is an uncharacterized protein from Bacillus subtilis (strain 168).